Here is a 1526-residue protein sequence, read N- to C-terminus: Probable autotransporter YpjA (1526 aa).

The N-terminal stretch at 1-29 (MNRTSPYYCRRSVLSLLISALIYAPPGMA) is a signal peptide. The disordered stretch occupies residues 1173–1223 (NSNWNLTNDVKPNPDPIPNPKPDPKPDPKPDPNPKPDPTPDPTPTPVPEKR). Over residues 1194 to 1206 (PDPKPDPKPDPNP) the composition is skewed to basic and acidic residues. A compositionally biased stretch (pro residues) spans 1207–1219 (KPDPTPDPTPTPV). The 269-residue stretch at 1258-1526 (ASPHNNNVWG…NAVAGVNWSF (269 aa)) folds into the Autotransporter domain.

It is found in the cell outer membrane. Its function is as follows. Upon overexpression shows increased adherence to polyvinyl chloride (PVC) plates, increased mature biofilm formation. The sequence is that of Probable autotransporter YpjA (ypjA) from Escherichia coli (strain K12).